A 422-amino-acid chain; its full sequence is CinA-like protein (422 aa).

The protein belongs to the CinA family.

The polypeptide is CinA-like protein (Mycolicibacterium gilvum (strain PYR-GCK) (Mycobacterium gilvum (strain PYR-GCK))).